Consider the following 304-residue polypeptide: MGGFVKTQKTNAYHKRFQVKFKRRRQGKTDYRARIRLTNQDKNKYNTPKYRFVVRFTNKDITAQIVYATIAGDIVMAAAYSHELPRYGLEVGLTNYAAAYCTGLLLARRVLKLRGLDQEYEGNIEATGEDYYVEPADERRPFRALLDVGLIRTTTGNRVFGALKGALDGGLDIPHSDKRFAGFKKDEKQLDSDIHRKYIYGGHVADYMRSMAEEEPEKFQAHFSEYLKKGIDADGMEALYKKVHAAIRADPTMAKSTKKEPATHKRYNLKKLTYEQRKASLVERLNALNSSAGADDDDEEEDDE.

Positions 285 to 304 (LNALNSSAGADDDDEEEDDE) are disordered. The segment covering 294-304 (ADDDDEEEDDE) has biased composition (acidic residues).

This sequence belongs to the universal ribosomal protein uL18 family. Component of the large ribosomal subunit (LSU).

It localises to the cytoplasm. Its subcellular location is the nucleus. Component of the ribosome, a large ribonucleoprotein complex responsible for the synthesis of proteins in the cell. The small ribosomal subunit (SSU) binds messenger RNAs (mRNAs) and translates the encoded message by selecting cognate aminoacyl-transfer RNA (tRNA) molecules. The large subunit (LSU) contains the ribosomal catalytic site termed the peptidyl transferase center (PTC), which catalyzes the formation of peptide bonds, thereby polymerizing the amino acids delivered by tRNAs into a polypeptide chain. The nascent polypeptides leave the ribosome through a tunnel in the LSU and interact with protein factors that function in enzymatic processing, targeting, and the membrane insertion of nascent chains at the exit of the ribosomal tunnel. The sequence is that of Large ribosomal subunit protein uL18z (RPL5A) from Oryza sativa subsp. japonica (Rice).